A 630-amino-acid polypeptide reads, in one-letter code: Mitochondrial Rho GTPase 1 (630 aa).

Residues 1–168 (MKEVRVVICG…FYMCRACVIY (168 aa)) enclose the Miro 1 domain. The Cytoplasmic portion of the chain corresponds to 1-598 (MKEVRVVICG…EEDSNKTNYQ (598 aa)). GTP-binding positions include 10–17 (GDQGVGKS), 57–61 (DTQSD), and 113–116 (NKSE). EF-hand domains follow at residues 184 to 219 (ATIH…CFSK) and 304 to 339 (KGYR…TPGL). Ca(2+)-binding residues include aspartate 197, asparagine 199, aspartate 201, glutamate 208, aspartate 317, aspartate 319, aspartate 321, and glutamate 328. A Miro 2 domain is found at 419 to 579 (RNVFLCFVVG…FIQLAESAQY (161 aa)). GTP-binding positions include 428–435 (GSKSCGKT), 459–463 (EFQST), and 527–530 (TKAD). Residues 599-619 (LVAALTAFGALLLSVGGSLTW) form a helical; Anchor for type IV membrane protein membrane-spanning segment. Over 620-630 (KIIKHQYYSKK) the chain is Mitochondrial intermembrane.

Belongs to the mitochondrial Rho GTPase family.

Its subcellular location is the mitochondrion outer membrane. Its function is as follows. Mitochondrial GTPase involved in mitochondrial trafficking. Probably involved in control of anterograde transport of mitochondria and their subcellular distribution. The sequence is that of Mitochondrial Rho GTPase 1 (gem1) from Schizosaccharomyces pombe (strain 972 / ATCC 24843) (Fission yeast).